The primary structure comprises 166 residues: Cyclic pyranopterin monophosphate synthase (166 aa).

Residues 75–77 (MCH) and 115–116 (ME) each bind substrate. Asp-130 is a catalytic residue.

It belongs to the MoaC family. Homohexamer; trimer of dimers.

It catalyses the reaction (8S)-3',8-cyclo-7,8-dihydroguanosine 5'-triphosphate = cyclic pyranopterin phosphate + diphosphate. The protein operates within cofactor biosynthesis; molybdopterin biosynthesis. In terms of biological role, catalyzes the conversion of (8S)-3',8-cyclo-7,8-dihydroguanosine 5'-triphosphate to cyclic pyranopterin monophosphate (cPMP). The chain is Cyclic pyranopterin monophosphate synthase from Shouchella clausii (strain KSM-K16) (Alkalihalobacillus clausii).